Reading from the N-terminus, the 101-residue chain is Urease subunit beta (101 aa).

It belongs to the urease beta subunit family. As to quaternary structure, heterotrimer of UreA (gamma), UreB (beta) and UreC (alpha) subunits. Three heterotrimers associate to form the active enzyme.

The protein localises to the cytoplasm. The enzyme catalyses urea + 2 H2O + H(+) = hydrogencarbonate + 2 NH4(+). The protein operates within nitrogen metabolism; urea degradation; CO(2) and NH(3) from urea (urease route): step 1/1. The chain is Urease subunit beta from Hahella chejuensis (strain KCTC 2396).